We begin with the raw amino-acid sequence, 353 residues long: Rhodopsin (353 aa).

Residues 1-36 (MNGTEGPYFYIPMVNTTGIVRSPYEYPQYYLVNPAA) lie on the Extracellular side of the membrane. Asn2 and Asn15 each carry an N-linked (GlcNAc...) asparagine glycan. A helical membrane pass occupies residues 37–61 (YAALGAYMFLLILVGFPINFLTLYV). Over 62-73 (TIEHKKLRTPLN) the chain is Cytoplasmic. The chain crosses the membrane as a helical span at residues 74–96 (YILLNLAVANLFMVFGGFTTTMY). Over 97–110 (TSMHGYFVLGRLGC) the chain is Extracellular. Cys110 and Cys187 are joined by a disulfide. The helical transmembrane segment at 111–133 (NLEGFFATLGGEIALWSLVVLAI) threads the bilayer. Positions 134–136 (ERW) match the 'Ionic lock' involved in activated form stabilization motif. Topologically, residues 134-152 (ERWMVVCKPISNFRFGEDH) are cytoplasmic. The chain crosses the membrane as a helical span at residues 153-173 (AIMGLAFTWVMAAACAVPPLV). The Extracellular segment spans residues 174–202 (GWSRYIPEGMQCSCGIDYYTRAEGFNNES). Residue Asn200 is glycosylated (N-linked (GlcNAc...) asparagine). The helical transmembrane segment at 203–224 (FVIYMFVCHFLIPLVVVFFCYG) threads the bilayer. Residues 225 to 252 (RLLCAVKEAAAAQQESETTQRAEREVSR) are Cytoplasmic-facing. Residues 253 to 274 (MVVIMVVAFLICWCPYAGVAWY) form a helical membrane-spanning segment. At 275 to 286 (IFTHQGSEFGPL) the chain is on the extracellular side. Residues 287-308 (FMTFPAFFAKSSSIYNPMIYIC) form a helical membrane-spanning segment. The residue at position 296 (Lys296) is an N6-(retinylidene)lysine. Residues 309–353 (MNKQFRHCMITTLCCGKNPFEEEEGASTTSKTEASSVSSSSVSPA) lie on the Cytoplasmic side of the membrane. S-palmitoyl cysteine attachment occurs at residues Cys322 and Cys323. Residues 330–353 (EEEGASTTSKTEASSVSSSSVSPA) are disordered. The span at 334–353 (ASTTSKTEASSVSSSSVSPA) shows a compositional bias: low complexity.

Belongs to the G-protein coupled receptor 1 family. Opsin subfamily. Phosphorylated on some or all of the serine and threonine residues present in the C-terminal region. Post-translationally, contains one covalently linked retinal chromophore.

Its subcellular location is the membrane. The protein localises to the cell projection. It is found in the cilium. The protein resides in the photoreceptor outer segment. Functionally, photoreceptor required for image-forming vision at low light intensity. While most salt water fish species use retinal as chromophore, most freshwater fish use 3-dehydroretinal, or a mixture of retinal and 3-dehydroretinal. Light-induced isomerization of 11-cis to all-trans retinal triggers a conformational change that activates signaling via G-proteins. Subsequent receptor phosphorylation mediates displacement of the bound G-protein alpha subunit by arrestin and terminates signaling. The chain is Rhodopsin (rho) from Chelon saliens (Leaping mullet).